The chain runs to 147 residues: Large ribosomal subunit protein uL13 (147 aa).

The protein belongs to the universal ribosomal protein uL13 family. Part of the 50S ribosomal subunit.

This protein is one of the early assembly proteins of the 50S ribosomal subunit, although it is not seen to bind rRNA by itself. It is important during the early stages of 50S assembly. The chain is Large ribosomal subunit protein uL13 from Leuconostoc mesenteroides subsp. mesenteroides (strain ATCC 8293 / DSM 20343 / BCRC 11652 / CCM 1803 / JCM 6124 / NCDO 523 / NBRC 100496 / NCIMB 8023 / NCTC 12954 / NRRL B-1118 / 37Y).